The chain runs to 167 residues: Ribosome maturation factor RimP (167 aa).

Belongs to the RimP family.

The protein resides in the cytoplasm. In terms of biological role, required for maturation of 30S ribosomal subunits. The protein is Ribosome maturation factor RimP of Cytophaga hutchinsonii (strain ATCC 33406 / DSM 1761 / CIP 103989 / NBRC 15051 / NCIMB 9469 / D465).